The following is a 353-amino-acid chain: MTAILERRESERLWGRFCNWITSTENRLYIGWFGVLMIPTLLTATSVFIIAFIAAPPVDIDGIREPVSGSLLYGNNIISGAIIPTSAAIGLHFYPIWEAASVDEWLYNGGPYELIVLHFLLGVACYMGREWELSFRLGMRPWIAVAYSAPVAAATAVFLIYPIGQGSFSDGMPLGISGTFNFMIVFQAEHNILMHPFHMLGVAGVFGGSLFSAMHGSLVTSSLIRETTENESANAGYRFGQEEETYNIVAAHGYFGRLIFQYASFNNSRSLHFFLAAWPVVGIWFTALGISTMAFNLNGFNFNQSVVDSQGRVINTWADIINRANLGMEVMHERNAHNFPLDLAAIEAPSTNG.

N-acetylthreonine is present on T2. Residue T2 is modified to Phosphothreonine. 3 consecutive transmembrane segments (helical) span residues 29-46, 118-133, and 142-156; these read YIGW…TATS, HFLL…EWEL, and WIAV…AATA. H118 lines the chlorophyll a pocket. Y126 contacts pheophytin a. [CaMn4O5] cluster is bound by residues D170 and E189. Residues 197–218 traverse the membrane as a helical segment; that stretch reads FHMLGVAGVFGGSLFSAMHGSL. H198 lines the chlorophyll a pocket. A quinone-binding positions include H215 and 264–265; that span reads SF. H215 lines the Fe cation pocket. H272 contributes to the Fe cation binding site. Residues 274–288 traverse the membrane as a helical segment; the sequence is FLAAWPVVGIWFTAL. Residues H332, E333, D342, and A344 each coordinate [CaMn4O5] cluster. The propeptide occupies 345 to 353; it reads AIEAPSTNG.

It belongs to the reaction center PufL/M/PsbA/D family. As to quaternary structure, PSII is composed of 1 copy each of membrane proteins PsbA, PsbB, PsbC, PsbD, PsbE, PsbF, PsbH, PsbI, PsbJ, PsbK, PsbL, PsbM, PsbT, PsbX, PsbY, PsbZ, Psb30/Ycf12, at least 3 peripheral proteins of the oxygen-evolving complex and a large number of cofactors. It forms dimeric complexes. The D1/D2 heterodimer binds P680, chlorophylls that are the primary electron donor of PSII, and subsequent electron acceptors. It shares a non-heme iron and each subunit binds pheophytin, quinone, additional chlorophylls, carotenoids and lipids. D1 provides most of the ligands for the Mn4-Ca-O5 cluster of the oxygen-evolving complex (OEC). There is also a Cl(-1) ion associated with D1 and D2, which is required for oxygen evolution. The PSII complex binds additional chlorophylls, carotenoids and specific lipids. serves as cofactor. Tyr-161 forms a radical intermediate that is referred to as redox-active TyrZ, YZ or Y-Z. In terms of processing, C-terminally processed by CTPA; processing is essential to allow assembly of the oxygen-evolving complex and thus photosynthetic growth.

It localises to the plastid. The protein localises to the chloroplast thylakoid membrane. It carries out the reaction 2 a plastoquinone + 4 hnu + 2 H2O = 2 a plastoquinol + O2. Functionally, photosystem II (PSII) is a light-driven water:plastoquinone oxidoreductase that uses light energy to abstract electrons from H(2)O, generating O(2) and a proton gradient subsequently used for ATP formation. It consists of a core antenna complex that captures photons, and an electron transfer chain that converts photonic excitation into a charge separation. The D1/D2 (PsbA/PsbD) reaction center heterodimer binds P680, the primary electron donor of PSII as well as several subsequent electron acceptors. This Citrus sinensis (Sweet orange) protein is Photosystem II protein D1.